A 548-amino-acid polypeptide reads, in one-letter code: Eukaryotic translation initiation factor 3 subunit D (548 aa).

The residue at position 53 (lysine 53) is an N6-acetyllysine. A Phosphoserine modification is found at serine 161. Residues aspartate 285–proline 299 are RNA gate. Residues proline 523–threonine 548 are disordered. 2 positions are modified to phosphoserine: serine 528 and serine 529. Positions serine 529–threonine 548 are enriched in acidic residues.

Belongs to the eIF-3 subunit D family. As to quaternary structure, component of the eukaryotic translation initiation factor 3 (eIF-3) complex, which is composed of 13 subunits: EIF3A, EIF3B, EIF3C, EIF3D, EIF3E, EIF3F, EIF3G, EIF3H, EIF3I, EIF3J, EIF3K, EIF3L and EIF3M. The eIF-3 complex appears to include 3 stable modules: module A is composed of EIF3A, EIF3B, EIF3G and EIF3I; module B is composed of EIF3F, EIF3H, and EIF3M; and module C is composed of EIF3C, EIF3D, EIF3E, EIF3K and EIF3L. EIF3C of module C binds EIF3B of module A and EIF3H of module B, thereby linking the three modules. EIF3J is a labile subunit that binds to the eIF-3 complex via EIF3B. The eIF-3 complex may interact with RPS6KB1 under conditions of nutrient depletion. Mitogenic stimulation may lead to binding and activation of a complex composed of MTOR and RPTOR, leading to phosphorylation and release of RPS6KB1 and binding of EIF4B to eIF-3.

It is found in the cytoplasm. Functionally, mRNA cap-binding component of the eukaryotic translation initiation factor 3 (eIF-3) complex, a complex required for several steps in the initiation of protein synthesis of a specialized repertoire of mRNAs. The eIF-3 complex associates with the 40S ribosome and facilitates the recruitment of eIF-1, eIF-1A, eIF-2:GTP:methionyl-tRNAi and eIF-5 to form the 43S pre-initiation complex (43S PIC). The eIF-3 complex stimulates mRNA recruitment to the 43S PIC and scanning of the mRNA for AUG recognition. The eIF-3 complex is also required for disassembly and recycling of post-termination ribosomal complexes and subsequently prevents premature joining of the 40S and 60S ribosomal subunits prior to initiation. The eIF-3 complex specifically targets and initiates translation of a subset of mRNAs involved in cell proliferation, including cell cycling, differentiation and apoptosis, and uses different modes of RNA stem-loop binding to exert either translational activation or repression. In the eIF-3 complex, EIF3D specifically recognizes and binds the 7-methylguanosine cap of a subset of mRNAs. This is Eukaryotic translation initiation factor 3 subunit D (Eif3d) from Mus musculus (Mouse).